Consider the following 184-residue polypeptide: Large ribosomal subunit protein uL6 (184 aa).

The protein belongs to the universal ribosomal protein uL6 family. In terms of assembly, part of the 50S ribosomal subunit.

In terms of biological role, this protein binds to the 23S rRNA, and is important in its secondary structure. It is located near the subunit interface in the base of the L7/L12 stalk, and near the tRNA binding site of the peptidyltransferase center. This chain is Large ribosomal subunit protein uL6, found in Pyrococcus abyssi (strain GE5 / Orsay).